Here is a 59-residue protein sequence, read N- to C-terminus: Small, acid-soluble spore protein H 1 (59 aa).

The protein belongs to the SspH family.

It localises to the spore core. This is Small, acid-soluble spore protein H 1 (sspH1) from Bacillus anthracis.